A 1158-amino-acid polypeptide reads, in one-letter code: ATP-dependent helicase/deoxyribonuclease subunit B (1158 aa).

The 275-residue stretch at 1–275 folds into the UvrD-like helicase ATP-binding domain; the sequence is MTLHAYLGRA…QYFNQLYRFN (275 aa). 8-15 is an ATP binding site; it reads GRAGTGKS. A UvrD-like helicase C-terminal domain is found at 269-583; the sequence is NQLYRFNNQD…SIGTMDLAKV (315 aa). [4Fe-4S] cluster-binding residues include C784, C1112, C1115, and C1121.

Belongs to the helicase family. AddB/RexB type 1 subfamily. As to quaternary structure, heterodimer of AddA and AddB. It depends on Mg(2+) as a cofactor. [4Fe-4S] cluster is required as a cofactor.

The heterodimer acts as both an ATP-dependent DNA helicase and an ATP-dependent, dual-direction single-stranded exonuclease. Recognizes the chi site generating a DNA molecule suitable for the initiation of homologous recombination. The AddB subunit has 5' -&gt; 3' nuclease activity but not helicase activity. The chain is ATP-dependent helicase/deoxyribonuclease subunit B from Staphylococcus aureus (strain MSSA476).